The primary structure comprises 230 residues: ATP phosphoribosyltransferase (230 aa).

It belongs to the ATP phosphoribosyltransferase family. Short subfamily. In terms of assembly, heteromultimer composed of HisG and HisZ subunits.

Its subcellular location is the cytoplasm. The catalysed reaction is 1-(5-phospho-beta-D-ribosyl)-ATP + diphosphate = 5-phospho-alpha-D-ribose 1-diphosphate + ATP. It functions in the pathway amino-acid biosynthesis; L-histidine biosynthesis; L-histidine from 5-phospho-alpha-D-ribose 1-diphosphate: step 1/9. Its function is as follows. Catalyzes the condensation of ATP and 5-phosphoribose 1-diphosphate to form N'-(5'-phosphoribosyl)-ATP (PR-ATP). Has a crucial role in the pathway because the rate of histidine biosynthesis seems to be controlled primarily by regulation of HisG enzymatic activity. The chain is ATP phosphoribosyltransferase (hisG) from Chelativorans sp. (strain BNC1).